Consider the following 254-residue polypeptide: Ribosomal RNA small subunit methyltransferase J (254 aa).

S-adenosyl-L-methionine-binding positions include 107–108, 123–124, and D177; these read RD and ER.

This sequence belongs to the methyltransferase superfamily. RsmJ family.

It localises to the cytoplasm. The enzyme catalyses guanosine(1516) in 16S rRNA + S-adenosyl-L-methionine = N(2)-methylguanosine(1516) in 16S rRNA + S-adenosyl-L-homocysteine + H(+). In terms of biological role, specifically methylates the guanosine in position 1516 of 16S rRNA. In Histophilus somni (strain 2336) (Haemophilus somnus), this protein is Ribosomal RNA small subunit methyltransferase J.